The sequence spans 182 residues: NADH-quinone oxidoreductase subunit B 1 (182 aa).

The [4Fe-4S] cluster site is built by C47, C48, C113, and C142.

This sequence belongs to the complex I 20 kDa subunit family. In terms of assembly, NDH-1 is composed of 14 different subunits. Subunits NuoB, C, D, E, F, and G constitute the peripheral sector of the complex. Requires [4Fe-4S] cluster as cofactor.

The protein resides in the cell inner membrane. The enzyme catalyses a quinone + NADH + 5 H(+)(in) = a quinol + NAD(+) + 4 H(+)(out). Functionally, NDH-1 shuttles electrons from NADH, via FMN and iron-sulfur (Fe-S) centers, to quinones in the respiratory chain. Couples the redox reaction to proton translocation (for every two electrons transferred, four hydrogen ions are translocated across the cytoplasmic membrane), and thus conserves the redox energy in a proton gradient. This chain is NADH-quinone oxidoreductase subunit B 1, found in Anaeromyxobacter dehalogenans (strain 2CP-C).